The primary structure comprises 239 residues: Probable transcriptional regulatory protein BLi00754/BL02339 (239 aa).

This sequence belongs to the TACO1 family. YeeN subfamily.

The protein localises to the cytoplasm. The polypeptide is Probable transcriptional regulatory protein BLi00754/BL02339 (Bacillus licheniformis (strain ATCC 14580 / DSM 13 / JCM 2505 / CCUG 7422 / NBRC 12200 / NCIMB 9375 / NCTC 10341 / NRRL NRS-1264 / Gibson 46)).